A 466-amino-acid polypeptide reads, in one-letter code: ATP synthase subunit beta (466 aa).

155 to 162 (GGAGVGKT) provides a ligand contact to ATP.

The protein belongs to the ATPase alpha/beta chains family. As to quaternary structure, F-type ATPases have 2 components, CF(1) - the catalytic core - and CF(0) - the membrane proton channel. CF(1) has five subunits: alpha(3), beta(3), gamma(1), delta(1), epsilon(1). CF(0) has three main subunits: a(1), b(2) and c(9-12). The alpha and beta chains form an alternating ring which encloses part of the gamma chain. CF(1) is attached to CF(0) by a central stalk formed by the gamma and epsilon chains, while a peripheral stalk is formed by the delta and b chains.

Its subcellular location is the cell inner membrane. The enzyme catalyses ATP + H2O + 4 H(+)(in) = ADP + phosphate + 5 H(+)(out). In terms of biological role, produces ATP from ADP in the presence of a proton gradient across the membrane. The catalytic sites are hosted primarily by the beta subunits. The polypeptide is ATP synthase subunit beta (Azoarcus sp. (strain BH72)).